The following is a 297-amino-acid chain: MSHSDQSQRFLFDDTDVRGEMVDLERSYSEVLAKHPYPEPVAQLLGEMLAAASLLCGTLKFDGLLVLQARSSGAVPLLMVECSSDRQVRGLARYSAESIGADAGMQELMPEGVLTLTVDPVKGQRYQGIVALEGVNLAECLSNYFASSEQLPTRFWLNANGRRARGLLLQQLPADRLKDPEAREASWQHLTTLADTLTAEELLALDNETVLHRLYHEETVRLFEPQPLVFHCSCSRERSANALVSLGQADCERLLEEEEGSISIDCQFCNQRYLFDASDVAQLFAGAGSQGPSETRH.

Disulfide bonds link Cys-232/Cys-234 and Cys-266/Cys-269.

This sequence belongs to the HSP33 family. Post-translationally, under oxidizing conditions two disulfide bonds are formed involving the reactive cysteines. Under reducing conditions zinc is bound to the reactive cysteines and the protein is inactive.

It is found in the cytoplasm. Its function is as follows. Redox regulated molecular chaperone. Protects both thermally unfolding and oxidatively damaged proteins from irreversible aggregation. Plays an important role in the bacterial defense system toward oxidative stress. The polypeptide is 33 kDa chaperonin (Pseudomonas aeruginosa (strain LESB58)).